The chain runs to 262 residues: Enoyl-[acyl-carrier-protein] reductase [NADH] FabI (262 aa).

NAD(+) contacts are provided by residues Gly13, 19–20 (SI), Gln40, 64–65 (DV), and Ile92. Ala95 contacts substrate. Catalysis depends on proton acceptor residues Tyr146 and Tyr156. Residues Lys163 and 192–196 (IRTLA) each bind NAD(+).

The protein belongs to the short-chain dehydrogenases/reductases (SDR) family. FabI subfamily. As to quaternary structure, homotetramer.

It catalyses the reaction a 2,3-saturated acyl-[ACP] + NAD(+) = a (2E)-enoyl-[ACP] + NADH + H(+). It participates in lipid metabolism; fatty acid biosynthesis. The protein operates within cofactor biosynthesis; biotin biosynthesis. Functionally, catalyzes the reduction of a carbon-carbon double bond in an enoyl moiety that is covalently linked to an acyl carrier protein (ACP). Involved in the elongation cycle of fatty acid which are used in the lipid metabolism and in the biotin biosynthesis. In Salmonella typhimurium (strain LT2 / SGSC1412 / ATCC 700720), this protein is Enoyl-[acyl-carrier-protein] reductase [NADH] FabI (fabI).